Here is a 632-residue protein sequence, read N- to C-terminus: Gamma-aminobutyric acid receptor subunit theta (632 aa).

Positions 1–21 (MGIRGMLRAAVILLLIRTWLA) are cleaved as a signal peptide. The Extracellular segment spans residues 22–268 (EGNYPSPIPK…FQVQREVNSY (247 aa)). N-linked (GlcNAc...) asparagine glycosylation occurs at N127. Residues C183 and C197 are joined by a disulfide bond. Residues 269–289 (LVQVYWPTVLTTITSWISFWM) form a helical membrane-spanning segment. Over 290-297 (NYDSSAAR) the chain is Cytoplasmic. Residues 298-315 (VTIGLTSMLILTTIDSHL) traverse the membrane as a helical segment. Residues 316-326 (RDKLPNISCIK) are Extracellular-facing. The helical transmembrane segment at 327-347 (AIDIYILVCLFFVFLSLLEYV) threads the bilayer. Residues 348 to 611 (YINYLFYSRG…DYVPKVDKWS (264 aa)) are Cytoplasmic-facing. 2 disordered regions span residues 410 to 458 (SPES…STSE) and 491 to 523 (HGVTHDHEDSNESLSSDERHGHGPSGKPMLHHG). Positions 413–425 (SLGSLTSTSEQAQ) are enriched in polar residues. Over residues 426-439 (LATSESLSPLTSLS) the composition is skewed to low complexity. Over residues 448–458 (ESLSDLPSTSE) the composition is skewed to polar residues. Basic and acidic residues predominate over residues 491 to 511 (HGVTHDHEDSNESLSSDERHG). Residues 612-632 (RFLFPLAFGLFNIVYWVYHMY) traverse the membrane as a helical segment.

It belongs to the ligand-gated ion channel (TC 1.A.9) family. Gamma-aminobutyric acid receptor (TC 1.A.9.5) subfamily. GABRQ sub-subfamily. Heteropentamer, formed by a combination of alpha (GABRA1-6), beta (GABRB1-3), gamma (GABRG1-3), delta (GABRD), epsilon (GABRE), rho (GABRR1-3), pi (GABRP) and theta (GABRQ) chains, each subunit exhibiting distinct physiological and pharmacological properties. In terms of tissue distribution, expressed in brain.

The protein resides in the postsynaptic cell membrane. Its subcellular location is the cell membrane. It carries out the reaction chloride(in) = chloride(out). Its activity is regulated as follows. Potentiated by etomidate, propofol, pregnanolone and pentobarbital. Theta subunit of the heteropentameric ligand-gated chloride channel gated by gamma-aminobutyric acid (GABA), a major inhibitory neurotransmitter in the brain. GABA-gated chloride channels, also named GABA(A) receptors (GABAAR), consist of five subunits arranged around a central pore and contain GABA active binding site(s) located at the alpha and beta subunit interfaces. When activated by GABA, GABAARs selectively allow the flow of chloride anions across the cell membrane down their electrochemical gradient. The chain is Gamma-aminobutyric acid receptor subunit theta from Homo sapiens (Human).